The following is a 764-amino-acid chain: Thyrotropin receptor (764 aa).

The first 21 residues, Met-1–Gly-21, serve as a signal peptide directing secretion. Residues Glu-22–Gly-413 are Extracellular-facing. A disulfide bond links Cys-31 and Cys-41. An LRR 1 repeat occupies Pro-51–Asn-74. Asn-77 and Asn-99 each carry an N-linked (GlcNAc...) asparagine glycan. LRR repeat units follow at residues Leu-125–Thr-150, Val-152–Gly-174, Ser-176–Gly-199, Lys-201–Gly-223, and Tyr-225–His-248. 2 N-linked (GlcNAc...) asparagine glycosylation sites follow: Asn-177 and Asn-198. Residue Asn-302 is glycosylated (N-linked (GlcNAc...) asparagine). Sulfotyrosine is present on Tyr-385. A helical membrane pass occupies residues Tyr-414–Thr-441. Topologically, residues Ser-442–Arg-450 are cytoplasmic. Residues Phe-451–Val-473 traverse the membrane as a helical segment. The Extracellular segment spans residues Asp-474 to Cys-494. The cysteines at positions 494 and 569 are disulfide-linked. A helical transmembrane segment spans residues Asn-495–Leu-517. At Glu-518–His-537 the chain is on the cytoplasmic side. Residues Ala-538–Ile-560 form a helical membrane-spanning segment. At Ser-561–Leu-580 the chain is on the extracellular side. A helical membrane pass occupies residues Ala-581 to Val-602. At Lys-603–Arg-625 the chain is on the cytoplasmic side. The chain crosses the membrane as a helical span at residues Met-626–Met-649. The Extracellular portion of the chain corresponds to Asn-650–Lys-660. Residues Ile-661–Thr-682 form a helical membrane-spanning segment. Topologically, residues Lys-683–Leu-764 are cytoplasmic. The PDZ-binding motif lies at Thr-762–Leu-764.

It belongs to the G-protein coupled receptor 1 family. FSH/LSH/TSH subfamily. Interacts with heterodimer GPHA2:GPHB5; this interaction stimulates cAMP production. Interacts (via the PDZ-binding motif) with SCRIB; regulates TSHR trafficking and function. Post-translationally, glycosylated. Sulfated. Sulfation on Tyr-385 plays a role in thyrotropin receptor binding and activation.

Its subcellular location is the cell membrane. It localises to the basolateral cell membrane. Its function is as follows. Receptor for the thyroid-stimulating hormone (TSH) or thyrotropin. Also acts as a receptor for the heterodimeric glycoprotein hormone (GPHA2:GPHB5) or thyrostimulin. The activity of this receptor is mediated by G proteins which activate adenylate cyclase. Plays a central role in controlling thyroid cell metabolism. The chain is Thyrotropin receptor (TSHR) from Ovis aries (Sheep).